The primary structure comprises 137 residues: Crustacean hyperglycemic hormones (137 aa).

Positions 1–28 are cleaved as a signal peptide; sequence MVSFRTMWSLVVVVVVVAASLGSSGVHG. Gln64 is subject to Pyrrolidone carboxylic acid. Position 66 is a D-phenylalanine; in form CHH-II (Phe66). 3 disulfides stabilise this stretch: Cys70/Cys106, Cys86/Cys102, and Cys89/Cys115. Position 135 is a valine amide (Val135).

The protein belongs to the arthropod CHH/MIH/GIH/VIH hormone family. As to expression, produced by the medulla terminalis X-organ in the eyestalks and transported to the sinus gland where they are stored and released.

Its subcellular location is the secreted. Hormone found in the sinus gland of isopods and decapods which controls the blood sugar level. Has a secretagogue action over the amylase released from the midgut gland. May act as a stress hormone and may be involved in the control of molting and reproduction. This chain is Crustacean hyperglycemic hormones, found in Procambarus clarkii (Red swamp crayfish).